The following is a 262-amino-acid chain: R3H domain-containing protein 4 (262 aa).

2 disordered regions span residues Met-1 to Leu-27 and Tyr-132 to Asp-155. Residues Gly-146–Asp-155 are compositionally biased toward basic and acidic residues. The R3H domain occupies Met-182–His-245.

The protein localises to the nucleus. This is R3H domain-containing protein 4 (R3hdm4) from Mus musculus (Mouse).